The chain runs to 475 residues: Glutamate--tRNA ligase (475 aa).

A 'HIGH' region motif is present at residues 9 to 19; it reads PSPTGYLHVGG. The short motif at 240-244 is the 'KMSKS' region element; that stretch reads KLSKR. Lysine 243 is an ATP binding site.

The protein belongs to the class-I aminoacyl-tRNA synthetase family. Glutamate--tRNA ligase type 1 subfamily. As to quaternary structure, monomer.

The protein localises to the cytoplasm. The enzyme catalyses tRNA(Glu) + L-glutamate + ATP = L-glutamyl-tRNA(Glu) + AMP + diphosphate. Functionally, catalyzes the attachment of glutamate to tRNA(Glu) in a two-step reaction: glutamate is first activated by ATP to form Glu-AMP and then transferred to the acceptor end of tRNA(Glu). The sequence is that of Glutamate--tRNA ligase from Vibrio campbellii (strain ATCC BAA-1116).